Reading from the N-terminus, the 398-residue chain is Succinyl-diaminopimelate desuccinylase (398 aa).

His68 provides a ligand contact to Zn(2+). Asp70 is an active-site residue. A Zn(2+)-binding site is contributed by Asp101. Glu135 (proton acceptor) is an active-site residue. Zn(2+) is bound by residues Glu136, Glu164, and His349.

It belongs to the peptidase M20A family. DapE subfamily. As to quaternary structure, homodimer. It depends on Zn(2+) as a cofactor. The cofactor is Co(2+).

It catalyses the reaction N-succinyl-(2S,6S)-2,6-diaminopimelate + H2O = (2S,6S)-2,6-diaminopimelate + succinate. It participates in amino-acid biosynthesis; L-lysine biosynthesis via DAP pathway; LL-2,6-diaminopimelate from (S)-tetrahydrodipicolinate (succinylase route): step 3/3. Its function is as follows. Catalyzes the hydrolysis of N-succinyl-L,L-diaminopimelic acid (SDAP), forming succinate and LL-2,6-diaminopimelate (DAP), an intermediate involved in the bacterial biosynthesis of lysine and meso-diaminopimelic acid, an essential component of bacterial cell walls. This is Succinyl-diaminopimelate desuccinylase from Wolbachia pipientis subsp. Culex pipiens (strain wPip).